The primary structure comprises 413 residues: Gamma-glutamyl phosphate reductase (413 aa).

The protein belongs to the gamma-glutamyl phosphate reductase family.

The protein localises to the cytoplasm. The enzyme catalyses L-glutamate 5-semialdehyde + phosphate + NADP(+) = L-glutamyl 5-phosphate + NADPH + H(+). It participates in amino-acid biosynthesis; L-proline biosynthesis; L-glutamate 5-semialdehyde from L-glutamate: step 2/2. In terms of biological role, catalyzes the NADPH-dependent reduction of L-glutamate 5-phosphate into L-glutamate 5-semialdehyde and phosphate. The product spontaneously undergoes cyclization to form 1-pyrroline-5-carboxylate. The sequence is that of Gamma-glutamyl phosphate reductase from Lactococcus lactis subsp. lactis (strain IL1403) (Streptococcus lactis).